The following is a 320-amino-acid chain: Putative cyclin-D7-1 (320 aa).

The interval 1–46 (MDDDDDTSFNNSLDLYCDEDPFDSTPPPPPPPPEQQQQAGTTTPDD) is disordered. Over residues 24–34 (STPPPPPPPPE) the composition is skewed to pro residues. Low complexity predominate over residues 35-44 (QQQQAGTTTP).

The protein belongs to the cyclin family. Cyclin D subfamily.

This chain is Putative cyclin-D7-1 (CYCD7-1), found in Oryza sativa subsp. japonica (Rice).